We begin with the raw amino-acid sequence, 396 residues long: S-adenosylmethionine synthase (396 aa).

His-15 contacts ATP. Asp-17 lines the Mg(2+) pocket. Glu-43 provides a ligand contact to K(+). L-methionine contacts are provided by Glu-56 and Gln-99. Residues 99 to 109 form a flexible loop region; the sequence is QSSDIAQGVDR. Residues 175 to 177, 241 to 242, Asp-250, 256 to 257, Ser-273, and Lys-277 each bind ATP; these read DGK, RF, and RK. L-methionine is bound at residue Asp-250. Lys-281 is an L-methionine binding site.

This sequence belongs to the AdoMet synthase family. As to quaternary structure, homotetramer; dimer of dimers. The cofactor is Mg(2+). It depends on K(+) as a cofactor.

It localises to the cytoplasm. The enzyme catalyses L-methionine + ATP + H2O = S-adenosyl-L-methionine + phosphate + diphosphate. It participates in amino-acid biosynthesis; S-adenosyl-L-methionine biosynthesis; S-adenosyl-L-methionine from L-methionine: step 1/1. Catalyzes the formation of S-adenosylmethionine (AdoMet) from methionine and ATP. The overall synthetic reaction is composed of two sequential steps, AdoMet formation and the subsequent tripolyphosphate hydrolysis which occurs prior to release of AdoMet from the enzyme. This chain is S-adenosylmethionine synthase, found in Pelotomaculum thermopropionicum (strain DSM 13744 / JCM 10971 / SI).